A 324-amino-acid polypeptide reads, in one-letter code: Glyoxylate/hydroxypyruvate reductase B (324 aa).

Residues arginine 237 and glutamate 266 contribute to the active site. Histidine 285 (proton donor) is an active-site residue.

The protein belongs to the D-isomer specific 2-hydroxyacid dehydrogenase family. GhrB subfamily. In terms of assembly, homodimer.

Its subcellular location is the cytoplasm. It carries out the reaction glycolate + NADP(+) = glyoxylate + NADPH + H(+). The catalysed reaction is (R)-glycerate + NAD(+) = 3-hydroxypyruvate + NADH + H(+). The enzyme catalyses (R)-glycerate + NADP(+) = 3-hydroxypyruvate + NADPH + H(+). Its function is as follows. Catalyzes the NADPH-dependent reduction of glyoxylate and hydroxypyruvate into glycolate and glycerate, respectively. In Enterobacter sp. (strain 638), this protein is Glyoxylate/hydroxypyruvate reductase B.